Consider the following 186-residue polypeptide: Nuclear transcription factor Y subunit C-5 (186 aa).

Positions 166–186 (QMPGAWTEEDATGANGGNGGN) are disordered.

The protein belongs to the NFYC/HAP5 subunit family. As to quaternary structure, heterotrimeric transcription factor composed of three components, NF-YA, NF-YB and NF-YC. NF-YB and NF-YC must interact and dimerize for NF-YA association and DNA binding. As to expression, expressed in inflorescences and flowers.

It is found in the nucleus. In terms of biological role, stimulates the transcription of various genes by recognizing and binding to a CCAAT motif in promoters. This Arabidopsis thaliana (Mouse-ear cress) protein is Nuclear transcription factor Y subunit C-5 (NFYC5).